Consider the following 305-residue polypeptide: Ribonucleoside-diphosphate reductase small subunit (305 aa).

E64, E94, and H97 together coordinate Fe cation. Y101 is a catalytic residue. Residues 150-170 (ILMFLIVEGIYFISSFYSISL) traverse the membrane as a helical segment. Fe cation-binding residues include E157, E191, and H194.

The protein belongs to the ribonucleoside diphosphate reductase small chain family. Heterotetramer composed of a homodimer of the large subunit (R1) and a homodimer of the small subunit (R2). Larger multisubunit protein complex are also active, composed of (R1)n(R2)n. Requires Fe cation as cofactor.

The protein resides in the host membrane. The catalysed reaction is a 2'-deoxyribonucleoside 5'-diphosphate + [thioredoxin]-disulfide + H2O = a ribonucleoside 5'-diphosphate + [thioredoxin]-dithiol. Its function is as follows. Ribonucleoside-diphosphate reductase holoenzyme provides the precursors necessary for viral DNA synthesis. Allows virus growth in non-dividing cells, as well as reactivation from latency in infected hosts. Catalyzes the biosynthesis of deoxyribonucleotides from the corresponding ribonucleotides. The sequence is that of Ribonucleoside-diphosphate reductase small subunit from Homo sapiens (Human).